We begin with the raw amino-acid sequence, 493 residues long: Cysteine--tRNA ligase (493 aa).

Cysteine 29 contacts Zn(2+). The short motif at 31 to 41 (ATVQSEPHIGH) is the 'HIGH' region element. Zn(2+)-binding residues include cysteine 214, histidine 239, and glutamate 243. The short motif at 270–274 (KMSKS) is the 'KMSKS' region element. Residue lysine 273 participates in ATP binding.

The protein belongs to the class-I aminoacyl-tRNA synthetase family. As to quaternary structure, monomer. Zn(2+) is required as a cofactor.

The protein resides in the cytoplasm. It catalyses the reaction tRNA(Cys) + L-cysteine + ATP = L-cysteinyl-tRNA(Cys) + AMP + diphosphate. The sequence is that of Cysteine--tRNA ligase from Renibacterium salmoninarum (strain ATCC 33209 / DSM 20767 / JCM 11484 / NBRC 15589 / NCIMB 2235).